A 178-amino-acid chain; its full sequence is Peptidyl-prolyl cis-trans isomerase H (178 aa).

The region spanning 14–177 (FFDISIGDVP…LPVKITECGQ (164 aa)) is the PPIase cyclophilin-type domain.

Belongs to the cyclophilin-type PPIase family. PPIase H subfamily.

Its subcellular location is the nucleus. It carries out the reaction [protein]-peptidylproline (omega=180) = [protein]-peptidylproline (omega=0). Its function is as follows. PPIases accelerate the folding of proteins. It catalyzes the cis-trans isomerization of proline imidic peptide bonds in oligopeptides. This chain is Peptidyl-prolyl cis-trans isomerase H (cyp7), found in Rhizopus delemar (strain RA 99-880 / ATCC MYA-4621 / FGSC 9543 / NRRL 43880) (Mucormycosis agent).